The following is a 61-amino-acid chain: uncharacterized protein (61 aa).

This is an uncharacterized protein from Acidianus bottle-shaped virus (isolate Italy/Pozzuoli) (ABV).